Consider the following 357-residue polypeptide: Protein-glutamate methylesterase/protein-glutamine glutaminase (357 aa).

The 118-residue stretch at 3–120 folds into the Response regulatory domain; it reads RVIVVDDSAF…LASMDLAALS (118 aa). Aspartate 54 is modified (4-aspartylphosphate). In terms of domain architecture, CheB-type methylesterase spans 165–357; sequence ERSRRDIIAI…AERVASALYK (193 aa). Residues serine 177, histidine 204, and aspartate 300 contribute to the active site.

Belongs to the CheB family. Phosphorylated by CheA. Phosphorylation of the N-terminal regulatory domain activates the methylesterase activity.

The protein resides in the cytoplasm. It catalyses the reaction [protein]-L-glutamate 5-O-methyl ester + H2O = L-glutamyl-[protein] + methanol + H(+). The catalysed reaction is L-glutaminyl-[protein] + H2O = L-glutamyl-[protein] + NH4(+). Involved in chemotaxis. Part of a chemotaxis signal transduction system that modulates chemotaxis in response to various stimuli. Catalyzes the demethylation of specific methylglutamate residues introduced into the chemoreceptors (methyl-accepting chemotaxis proteins or MCP) by CheR. Also mediates the irreversible deamidation of specific glutamine residues to glutamic acid. This chain is Protein-glutamate methylesterase/protein-glutamine glutaminase, found in Lawsonia intracellularis (strain PHE/MN1-00).